The primary structure comprises 417 residues: Adrenocortical dysplasia protein homolog (417 aa).

The PWI motif lies at 11–13; it reads PWI. Residue Ser25 is modified to Phosphoserine. An interaction with POT1 region spans residues 156-245; sequence ESASSSAGLT…SSIDSSQKAQ (90 aa). 2 stretches are compositionally biased toward polar residues: residues 237–250 and 259–292; these read SIDS…NPAS and SGAS…TSPR. Residues 237 to 309 form a disordered region; it reads SIDSSQKAQE…PCSSTPSSPL (73 aa). Low complexity predominate over residues 296 to 309; that stretch reads PSSTPCSSTPSSPL. A phosphoserine mark is found at Ser313 and Ser317. A Glycyl lysine isopeptide (Lys-Gly) (interchain with G-Cter in SUMO2) cross-link involves residue Lys348.

Component of the shelterin complex (telosome) composed of TERF1, TERF2, TINF2, TERF2IP ACD and POT1. Forms heterodimers with POT1. Identified in a complex with POT1 and single-stranded telomeric DNA. Interacts with STN1 and TINF2.

The protein localises to the nucleus. It is found in the chromosome. The protein resides in the telomere. Functionally, component of the shelterin complex (telosome) that is involved in the regulation of telomere length and protection. Shelterin associates with arrays of double-stranded TTAGGG repeats added by telomerase and protects chromosome ends. Without its protective activity, telomeres are no longer hidden from the DNA damage surveillance and chromosome ends are inappropriately processed by DNA repair pathways. Promotes binding of POT1 to single-stranded telomeric DNA. Modulates the inhibitory effects of POT1 on telomere elongation. The ACD-POT1 heterodimer enhances telomere elongation by recruiting telomerase to telomeres and increasing its processivity. May play a role in organogenesis. The chain is Adrenocortical dysplasia protein homolog from Rattus norvegicus (Rat).